A 453-amino-acid chain; its full sequence is Exopolyphosphatase PRUNE1 (453 aa).

Met1 is modified (N-acetylmethionine). Residues Asp28, Asp30, Asp106, and Asp179 each coordinate Mn(2+). Residues 106-108 carry the DHH motif motif; it reads DHH. The segment at 393–420 is essential for homodimerization; sequence SLISGLSQDEEDPPLPPTPMNSLVDECP. A disordered region spans residues 395-421; that stretch reads ISGLSQDEEDPPLPPTPMNSLVDECPL. Position 399 is a phosphoserine (Ser399). Thr410 is modified (phosphothreonine). Ser414 carries the phosphoserine modification.

Belongs to the PPase class C family. Prune subfamily. In terms of assembly, homooligomer. Able to homodimerize via its C-terminal domain. Interacts with NME1. Interacts with GSK3; at focal adhesion complexes where paxillin and vinculin are colocalized. Interacts with alpha and beta tubulin. The cofactor is Mn(2+). As to expression, ubiquitously expressed. Seems to be overexpressed in aggressive sarcoma subtypes, such as leiomyosarcomas and malignant fibrous histiocytomas (MFH) as well as in the less malignant liposarcomas.

It localises to the cytoplasm. The protein localises to the nucleus. Its subcellular location is the cell junction. The protein resides in the focal adhesion. It carries out the reaction diphosphate + H2O = 2 phosphate + H(+). Activated by magnesium ions and inhibited by manganese ions. Inhibited by dipyridamole, moderately sensitive to IBMX and inhibited by vinpocetine. Its function is as follows. Phosphodiesterase (PDE) that has higher activity toward cAMP than cGMP, as substrate. Plays a role in cell proliferation, migration and differentiation, and acts as a negative regulator of NME1. Plays a role in the regulation of neurogenesis. Involved in the regulation of microtubule polymerization. This is Exopolyphosphatase PRUNE1 from Homo sapiens (Human).